The following is a 440-amino-acid chain: Enolase (440 aa).

Gln-163 contacts (2R)-2-phosphoglycerate. The Proton donor role is filled by Glu-205. Positions 242, 288, and 315 each coordinate Mg(2+). 4 residues coordinate (2R)-2-phosphoglycerate: Lys-340, Arg-369, Ser-370, and Lys-391. Residue Lys-340 is the Proton acceptor of the active site.

Belongs to the enolase family. Requires Mg(2+) as cofactor.

It localises to the cytoplasm. The protein resides in the secreted. It is found in the cell surface. It carries out the reaction (2R)-2-phosphoglycerate = phosphoenolpyruvate + H2O. It functions in the pathway carbohydrate degradation; glycolysis; pyruvate from D-glyceraldehyde 3-phosphate: step 4/5. Its function is as follows. Catalyzes the reversible conversion of 2-phosphoglycerate (2-PG) into phosphoenolpyruvate (PEP). It is essential for the degradation of carbohydrates via glycolysis. The protein is Enolase of Pediococcus pentosaceus (strain ATCC 25745 / CCUG 21536 / LMG 10740 / 183-1w).